An 85-amino-acid chain; its full sequence is Large ribosomal subunit protein bL27 (85 aa).

The segment at 1–20 (MAHKKAGGSTRNGRDSESKR) is disordered.

This sequence belongs to the bacterial ribosomal protein bL27 family.

The polypeptide is Large ribosomal subunit protein bL27 (Yersinia pseudotuberculosis serotype O:1b (strain IP 31758)).